We begin with the raw amino-acid sequence, 187 residues long: MGNKQTIFTEEQLDNYQDCTFFNKKDILKLHSRFYELAPNLVPMDYRKSPIVHVPMSLIIQMPELRENPFKERIVAAFSEDGEGNLTFNDFVDMFSVLCESAPRELKANYAFKIYDFNTDNFICKEDLELTLARLTKSELDEEEVVLVCDKVIEEADLDGDGKLGFADFEDMIAKAPDFLSTFHIRI.

EF-hand domains are found at residues 66 to 101 (RENP…LCES), 103 to 138 (PREL…LTKS), and 144 to 179 (EVVL…APDF). Residues Asp116, Asn118, Asp120, Asp127, Asp157, Asp159, Asp161, Lys163, and Asp168 each contribute to the Ca(2+) site.

As to quaternary structure, monomer. Homodimer. Interacts with WHRN and MYO7A. Interacts with ITGA2B (via C-terminus cytoplasmic tail region); the interactions are stabilized/increased in a calcium and magnesium-dependent manner. Interacts with ITGA7 (via C-terminus cytoplasmic tail region); the interactions are stabilized/increased in a calcium and magnesium-dependent manner. Interacts with TMC1. Interacts with TMC2. Widely expressed.

It is found in the cytoplasm. The protein resides in the cell projection. The protein localises to the stereocilium. Its subcellular location is the photoreceptor inner segment. It localises to the cilium. It is found in the photoreceptor outer segment. The protein resides in the cell membrane. The protein localises to the sarcolemma. In terms of biological role, calcium- and integrin-binding protein that plays a role in intracellular calcium homeostasis. Acts as an auxiliary subunit of the sensory mechanoelectrical transduction (MET) channel in hair cells. Essential for mechanoelectrical transduction (MET) currents in auditory hair cells and thereby required for hearing. Regulates the function of hair cell mechanotransduction by controlling the distribution of transmembrane channel-like proteins TMC1 and TMC2, and by regulating the function of the MET channels in hair cells. Required for the maintenance of auditory hair cell stereocilia bundle morphology and function and for hair-cell survival in the cochlea. Critical for proper photoreceptor cell maintenance and function. Plays a role in intracellular calcium homeostasis by decreasing ATP-induced calcium release. This Homo sapiens (Human) protein is Calcium and integrin-binding family member 2 (CIB2).